A 122-amino-acid chain; its full sequence is Large ribosomal subunit protein uL18 (122 aa).

It belongs to the universal ribosomal protein uL18 family. As to quaternary structure, part of the 50S ribosomal subunit; part of the 5S rRNA/L5/L18/L25 subcomplex. Contacts the 5S and 23S rRNAs.

Functionally, this is one of the proteins that bind and probably mediate the attachment of the 5S RNA into the large ribosomal subunit, where it forms part of the central protuberance. The protein is Large ribosomal subunit protein uL18 of Desulfitobacterium hafniense (strain Y51).